The sequence spans 236 residues: CD81 antigen (236 aa).

Residues Met1–Tyr12 are Cytoplasmic-facing. A helical membrane pass occupies residues Leu13–Leu33. The Extracellular segment spans residues Trp34 to Tyr63. Residues Ile64 to Ile84 form a helical membrane-spanning segment. The Cytoplasmic portion of the chain corresponds to Gln85–Cys89. Residues Leu90–Gly112 traverse the membrane as a helical segment. The Extracellular segment spans residues Phe113–Lys201. Disulfide bonds link Cys156–Cys190 and Cys157–Cys175. The chain crosses the membrane as a helical span at residues Leu202 to Met224. Cholesterol is bound at residue Glu219. The Cytoplasmic segment spans residues Val225 to Tyr236.

Belongs to the tetraspanin (TM4SF) family. Homodimer. Part of a complex composed of CD19, CR2/CD21, CD81 and IFITM1/CD225 in the membrane of mature B cells. Interacts (via the second extracellular domain) with CD19; this interaction is initiated early during biosynthesis in the ER and enables trafficking of only properly folded CD19. Part of a complex that includes MHC class II/HLA-DR molecules and IFITM1. Interacts with IFITM1. Interacts with IFITM2 and IFITM3. Part of integrin-tetraspanin complex composed of CD9, CD81, beta-1 and beta-2 integrins in the membrane of monocyte/macrophages. Interacts (via the second extracellular domain) with integrin ITGAV:ITGB3. Interacts with CD247/CD3 zeta, ICAM1 and CD9 at the immune synapse on T cell membrane. Part of a GPCR-tetraspanin complex consisting at least of ADGRG1, CD81, possibly CD9, and GNA11 in which CD81 enhances the association of ADGRG1 with GNA11. Part of a complex composed of CD9, CD81, PTGFRN and IGSF8. Interacts directly with IGSF8. Interacts with CD53 and SCIMP. Interacts with SAMHD1 (via its C-terminus). Interacts with glypican GPC3 and with the transcriptional repressor HHEX; binding to GPC3 decreases the availability of free CD81 for binding to HHEX, resulting in nuclear translocation of HHEX and transcriptional repression. Interacts with CLDN1. Interacts with CLDN6 and CLDN9. Not glycosylated. In terms of processing, likely constitutively palmitoylated at low levels. Protein palmitoylation is up-regulated upon coligation of BCR and CD9-C2R-CD81 complexes in lipid rafts.

The protein resides in the cell membrane. The protein localises to the basolateral cell membrane. Functionally, structural component of specialized membrane microdomains known as tetraspanin-enriched microdomains (TERMs), which act as platforms for receptor clustering and signaling. Essential for trafficking and compartmentalization of CD19 receptor on the surface of activated B cells. Upon initial encounter with microbial pathogens, enables the assembly of CD19-CR2/CD21 and B cell receptor (BCR) complexes at signaling TERMs, lowering the threshold dose of antigen required to trigger B cell clonal expansion and antibody production. In T cells, facilitates the localization of CD247/CD3 zeta at antigen-induced synapses with B cells, providing for costimulation and polarization toward T helper type 2 phenotype. Present in MHC class II compartments, may also play a role in antigen presentation. Can act both as positive and negative regulator of homotypic or heterotypic cell-cell fusion processes. Positively regulates sperm-egg fusion and may be involved in acrosome reaction. In myoblasts, associates with CD9 and PTGFRN and inhibits myotube fusion during muscle regeneration. In macrophages, associates with CD9 and beta-1 and beta-2 integrins, and prevents macrophage fusion into multinucleated giant cells specialized in ingesting complement-opsonized large particles. Also prevents the fusion of mononuclear cell progenitors into osteoclasts in charge of bone resorption. May regulate the compartmentalization of enzymatic activities. In T cells, defines the subcellular localization of dNTPase SAMHD1 and permits its degradation by the proteasome, thereby controlling intracellular dNTP levels. Also involved in cell adhesion and motility. Positively regulates integrin-mediated adhesion of macrophages, particularly relevant for the inflammatory response in the lung. The protein is CD81 antigen (Cd81) of Rattus norvegicus (Rat).